Here is a 586-residue protein sequence, read N- to C-terminus: A-type ATP synthase subunit A (586 aa).

232–239 contributes to the ATP binding site; the sequence is GPFGSGKT.

It belongs to the ATPase alpha/beta chains family. In terms of assembly, has multiple subunits with at least A(3), B(3), C, D, E, F, H, I and proteolipid K(x).

Its subcellular location is the cell membrane. The catalysed reaction is ATP + H2O + 4 H(+)(in) = ADP + phosphate + 5 H(+)(out). Its function is as follows. Component of the A-type ATP synthase that produces ATP from ADP in the presence of a proton gradient across the membrane. The A chain is the catalytic subunit. This chain is A-type ATP synthase subunit A, found in Methanococcus maripaludis (strain C7 / ATCC BAA-1331).